A 1194-amino-acid polypeptide reads, in one-letter code: Multidrug efflux ATP-binding/permease protein BCG_0231 (1194 aa).

The next 6 membrane-spanning stretches (helical) occupy residues Leu-20–Val-40, Leu-56–Val-76, Leu-130–Val-150, Trp-153–Ala-173, Phe-258–Phe-278, and Trp-279–Ala-299. One can recognise an ABC transmembrane type-1 1 domain in the interval Leu-21–Gln-301. An ABC transporter 1 domain is found at Leu-334–Pro-568. Gly-367–Ser-374 provides a ligand contact to ATP. 6 helical membrane passes run Ala-628–Ile-648, Val-660–Val-680, Leu-743–Ile-763, Ala-765–Phe-785, Leu-847–Leu-867, and Val-878–Ile-898. An ABC transmembrane type-1 2 domain is found at Ala-628–Arg-910. Residues Val-942 to Ala-1177 enclose the ABC transporter 2 domain. Gly-976–Ser-983 is a binding site for ATP.

This sequence belongs to the ABC transporter superfamily. Lipid exporter (TC 3.A.1.106) family.

It localises to the cell inner membrane. Functionally, overexpression increases resistance to chloramphenicol, ampicillin, streptomycin, tetracyclin and vancomycin. This Mycobacterium bovis (strain BCG / Pasteur 1173P2) protein is Multidrug efflux ATP-binding/permease protein BCG_0231.